The chain runs to 375 residues: Paralyzed arrest at two-fold protein 6 (375 aa).

Residues 1–51 form a disordered region; the sequence is MSTLGRSKTPSRDEPKKPGVFEKLSGTLSRKKKAPEDEHGNQGGAHHATDE. The span at 10-20 shows a compositional bias: basic and acidic residues; sequence PSRDEPKKPGV. Calponin-homology (CH) domains lie at 99-206 and 266-373; these read AQVV…LHYR and AHVK…TKYK.

The protein belongs to the parvin family. In terms of assembly, may interact (via calponin-homology (CH) 2 domain) with pat-4 (via kinase domain). May form a complex with unc-112 and pat-4. Component of an integrin containing attachment complex, composed of at least pat-2, pat-3, pat-4, pat-6, unc-52, unc-97 and unc-112. Expressed from 1.5 stage embryos, mostly within the muscle cells. In adult hermaphrodites, expressed in the attachments of other muscles, including the uterine, anal depressor, anal sphincter, and vulval muscles, as well as in the spermatheca and the distal tip cells. Expressed in mechanosensory receptor neurons ALML/R, PLML/R, AVM, and PVM. Localizes at body wall muscle attachments.

Its subcellular location is the cytoplasm. It localises to the cytoskeleton. The protein localises to the myofibril. The protein resides in the sarcomere. It is found in the m line. Its subcellular location is the perikaryon. It localises to the cell projection. The protein localises to the axon. Involved in the regulation of cell adhesion and cytoskeleton organization. Component of an integrin containing attachment complex, which is required for muscle development and maintenance. During embryonic development, required to recruit cpna-1, unc-89 and myofilaments to newly forming integrin attachments composed of integrins pat-2/pat-3, pat-4 and unc-112. Also required to reposition the integrin-based attachments so that they form the highly ordered array of dense body and M-line attachments that are characteristic of mature muscle cells. During the formation of neuromuscular junctions at the larval stage, negatively regulates membrane protrusion from body wall muscles. The protein is Paralyzed arrest at two-fold protein 6 of Caenorhabditis elegans.